The following is a 514-amino-acid chain: Peptide chain release factor 3 (514 aa).

Residues 8-268 form the tr-type G domain; it reads KKRRTFAIIS…TFLKFAPEPH (261 aa). GTP contacts are provided by residues 17–24, 85–89, and 139–142; these read SHPDAGKT, DTPGH, and NKLD.

The protein belongs to the TRAFAC class translation factor GTPase superfamily. Classic translation factor GTPase family. PrfC subfamily.

The protein resides in the cytoplasm. Increases the formation of ribosomal termination complexes and stimulates activities of RF-1 and RF-2. It binds guanine nucleotides and has strong preference for UGA stop codons. It may interact directly with the ribosome. The stimulation of RF-1 and RF-2 is significantly reduced by GTP and GDP, but not by GMP. This chain is Peptide chain release factor 3, found in Streptococcus thermophilus (strain CNRZ 1066).